The chain runs to 408 residues: CinA-like protein (408 aa).

Belongs to the CinA family.

The protein is CinA-like protein of Anaeromyxobacter sp. (strain K).